Consider the following 193-residue polypeptide: Ion-translocating oxidoreductase complex subunit B (193 aa).

Residues methionine 1–alanine 26 are hydrophobic. The 59-residue stretch at glutamate 32–valine 90 folds into the 4Fe-4S domain. Cysteine 49, cysteine 52, cysteine 57, cysteine 73, cysteine 114, cysteine 117, cysteine 120, cysteine 124, cysteine 144, cysteine 147, cysteine 150, and cysteine 154 together coordinate [4Fe-4S] cluster. 2 consecutive 4Fe-4S ferredoxin-type domains span residues lysine 105 to lysine 134 and methionine 136 to valine 164.

This sequence belongs to the 4Fe4S bacterial-type ferredoxin family. RnfB subfamily. The complex is composed of six subunits: RnfA, RnfB, RnfC, RnfD, RnfE and RnfG. It depends on [4Fe-4S] cluster as a cofactor.

The protein localises to the cell inner membrane. In terms of biological role, part of a membrane-bound complex that couples electron transfer with translocation of ions across the membrane. The sequence is that of Ion-translocating oxidoreductase complex subunit B from Shewanella sp. (strain MR-7).